The primary structure comprises 87 residues: Omega-lycotoxin-Am1c (87 aa).

The N-terminal stretch at 1–17 (MKLSIFFVLFFIAIAYC) is a signal peptide. Residues 18–40 (QPEFLDDEEDEVEETLPVAEEGR) constitute a propeptide that is removed on maturation. Intrachain disulfides connect cysteine 44/cysteine 59, cysteine 51/cysteine 64, cysteine 58/cysteine 84, and cysteine 66/cysteine 82.

The protein belongs to the neurotoxin omega-lctx family. Expressed by the venom gland.

It localises to the secreted. In terms of biological role, modulates Cav2.1/CACNA1A voltage-gated calcium channels (P/Q-type currents) in rat cerebellar Purkinje cells and hippocampal CA1-CA3 neurons. At saturating concentrations (&gt;10 nM) decelerates activation kinetics and slightly increases peak amplitude without affecting deactivation kinetics. In vivo, does not cause death when intravenously injected into mice. In rat models, through its activity on Cav2.1/CACNA1A, has an ameliorative effect on memory defects provoked by hyperstimulation of N-methyl-D-aspartate receptors (NMDARs) in the hippocampus. This Alopecosa marikovskyi (Wolf spider) protein is Omega-lycotoxin-Am1c.